The sequence spans 425 residues: Enolase (425 aa).

(2R)-2-phosphoglycerate is bound at residue glutamine 162. Glutamate 204 (proton donor) is an active-site residue. The Mg(2+) site is built by aspartate 241, glutamate 282, and aspartate 309. Lysine 334, arginine 363, serine 364, and lysine 385 together coordinate (2R)-2-phosphoglycerate. Residue lysine 334 is the Proton acceptor of the active site.

Belongs to the enolase family. The cofactor is Mg(2+).

It localises to the cytoplasm. Its subcellular location is the secreted. It is found in the cell surface. It carries out the reaction (2R)-2-phosphoglycerate = phosphoenolpyruvate + H2O. The protein operates within carbohydrate degradation; glycolysis; pyruvate from D-glyceraldehyde 3-phosphate: step 4/5. In terms of biological role, catalyzes the reversible conversion of 2-phosphoglycerate (2-PG) into phosphoenolpyruvate (PEP). It is essential for the degradation of carbohydrates via glycolysis. This Corynebacterium urealyticum (strain ATCC 43042 / DSM 7109) protein is Enolase.